A 461-amino-acid chain; its full sequence is Bacterial E1-like protein BilD (461 aa).

The active-site Glycyl thioester intermediate is C385.

Component of the Bil (bacterial ISG15-like) antiviral defense system, composed of BilA, BilB, BilC and BilD. The Bil system specifically conjugates a ubiquitin-like moiety (bilA) to the bacteriophage central tail fiber (CTF, or tip attachment protein J) via reactions involving E1 (bilD) and E2 (bilB). Modifies CTF of phage SECphi27 and SECphi4, which probably interferes with assembly of the phage tail. Also modifies T5 baseplate hub protein pb3 (gene D16), but not gp27 of phage T6 (Bil defends against T6). BilD (E1) catalyzes the first step in conjugation. Activates ubiquitin-like BilA by first adenylating its C-terminal glycine residue with ATP, and then conjugates it to the side chain of a cysteine residue in E1 (this protein), yielding a ubiquitin-E1 thioester and free AMP. Bil-encoding bacteria produce mostly defective phage SECphi27, many of which have phage assembly defects, including no tails. SECphi27 phage progeny produced in E.coli with the Bil system inject less DNA into naive host cells, maybe because the phage are less able to adsorb and inject their DNA into host cells. In terms of biological role, expression of the Bil system in E.coli (strain MG1655) confers about 100-fold resistance to phage SECphi27, SECphi18, SECphi6, SECphi4 and T5, but not to SECphi17. When cells expressing the Bil system are infected by phage SECphi27 at low multiplicity of infection (0.03 MOI) the culture survives, at 3.0 MOI the culture collapses at the same time as cells without the Bil system. The sequence is that of Bacterial E1-like protein BilD from Collimonas sp. (strain OK412).